A 524-amino-acid polypeptide reads, in one-letter code: N-acetylgalactosamine-6-sulfatase (524 aa).

Positions 1–27 are cleaved as a signal peptide; that stretch reads MTACSTAIRAQQLLLPVLSALGLLAAG. Residues 28 to 381 form a catalytic domain region; sequence APQPPNIVLL…PTMLQGHIID (354 aa). Ca(2+)-binding residues include D40, D41, and C80. The Nucleophile role is filled by C80. The residue at position 80 (C80) is a 3-oxoalanine (Cys). Residue H143 is part of the active site. N-linked (GlcNAc...) asparagine glycosylation occurs at N205. Ca(2+) is bound by residues D290 and N291. A disulfide bridge links C310 with C421. Residue N425 is glycosylated (N-linked (GlcNAc...) asparagine). Disulfide bonds link C491-C520 and C503-C509.

The protein belongs to the sulfatase family. Homodimer. The cofactor is Ca(2+). In terms of processing, the conversion to 3-oxoalanine (also known as C-formylglycine, FGly), of a serine or cysteine residue in prokaryotes and of a cysteine residue in eukaryotes, is critical for catalytic activity.

The protein localises to the lysosome. It carries out the reaction Hydrolysis of the 6-sulfate groups of the N-acetyl-D-galactosamine 6-sulfate units of chondroitin sulfate and of the D-galactose 6-sulfate units of keratan sulfate.. The chain is N-acetylgalactosamine-6-sulfatase (Galns) from Rattus norvegicus (Rat).